The primary structure comprises 341 residues: tRNA N6-adenosine threonylcarbamoyltransferase (341 aa).

Positions 111 and 115 each coordinate Fe cation. Substrate-binding positions include 134 to 138 (LVSGG), aspartate 167, glycine 180, and asparagine 276. Position 304 (aspartate 304) interacts with Fe cation.

This sequence belongs to the KAE1 / TsaD family. Fe(2+) serves as cofactor.

The protein localises to the cytoplasm. It carries out the reaction L-threonylcarbamoyladenylate + adenosine(37) in tRNA = N(6)-L-threonylcarbamoyladenosine(37) in tRNA + AMP + H(+). Required for the formation of a threonylcarbamoyl group on adenosine at position 37 (t(6)A37) in tRNAs that read codons beginning with adenine. Is involved in the transfer of the threonylcarbamoyl moiety of threonylcarbamoyl-AMP (TC-AMP) to the N6 group of A37, together with TsaE and TsaB. TsaD likely plays a direct catalytic role in this reaction. This chain is tRNA N6-adenosine threonylcarbamoyltransferase, found in Pseudomonas putida (strain ATCC 47054 / DSM 6125 / CFBP 8728 / NCIMB 11950 / KT2440).